Reading from the N-terminus, the 58-residue chain is Preprotein translocase subunit SecG (58 aa).

The Cytoplasmic segment spans residues M1–S33. A helical membrane pass occupies residues P34–L55. Topologically, residues P56–L58 are extracellular.

This sequence belongs to the SEC61-beta family. As to quaternary structure, component of the protein translocase complex. Heterotrimer consisting of alpha (SecY), beta (SecG) and gamma (SecE) subunits. Can form oligomers of the heterotrimer.

Its subcellular location is the cell membrane. In terms of biological role, involved in protein export. The function of the beta subunit is unknown, but it may be involved in stabilization of the trimeric complex. The sequence is that of Preprotein translocase subunit SecG from Pyrobaculum arsenaticum (strain DSM 13514 / JCM 11321 / PZ6).